The sequence spans 433 residues: Protein RETICULATA-RELATED 1, chloroplastic (433 aa).

A chloroplast-targeting transit peptide spans 1-63; it reads MSISLKISHI…LSSRNLRNRC (63 aa). Val-64 carries the N-acetylvaline modification. Over residues 93 to 105 the composition is skewed to acidic residues; it reads DLEPELDDGDGGD. Residues 93-143 are disordered; it reads DLEPELDDGDGGDENGNNDGGGNGGNGDGGGGGGDGEGDDGEDEADKAEEK. Residues 110–127 are compositionally biased toward gly residues; the sequence is NDGGGNGGNGDGGGGGGD. Residues 128–139 show a composition bias toward acidic residues; that stretch reads GEGDDGEDEADK. Helical transmembrane passes span 249–269 and 323–343; these read LYAA…GLLA and LLYG…ANLI.

It belongs to the RETICULATA family. Expressed in root vasculature, distal region of young leaf primordia, leaf bundle sheath cells, hydathodes and pollen grains.

It localises to the plastid. Its subcellular location is the chloroplast membrane. In terms of biological role, may play a role in leaf development. This is Protein RETICULATA-RELATED 1, chloroplastic from Arabidopsis thaliana (Mouse-ear cress).